Here is a 542-residue protein sequence, read N- to C-terminus: Putative cysteine ligase BshC (542 aa).

The stretch at 458 to 479 forms a coiled coil; sequence LTKNATLLQAQIDFLHQTLQRA.

The protein belongs to the BshC family.

Its function is as follows. Involved in bacillithiol (BSH) biosynthesis. May catalyze the last step of the pathway, the addition of cysteine to glucosamine malate (GlcN-Mal) to generate BSH. The chain is Putative cysteine ligase BshC from Geobacillus sp. (strain WCH70).